Consider the following 137-residue polypeptide: Histone H2B (137 aa).

Residues 1-10 show a composition bias toward basic and acidic residues; the sequence is MPPKPADKKP. The tract at residues 1-45 is disordered; it reads MPPKPADKKPASKAPATASKAPEKKDAGKKTAASGDKKKRTKARK. An N6-acetyllysine; alternate mark is found at Lys-8 and Lys-9. Residues Lys-8 and Lys-9 each participate in a glycyl lysine isopeptide (Lys-Gly) (interchain with G-Cter in SUMO); alternate cross-link. Residue Ser-12 is modified to Phosphoserine. Position 13 is an N6-acetyllysine (Lys-13). Lys-24 carries the N6-acetyllysine; alternate modification. Residue Lys-24 forms a Glycyl lysine isopeptide (Lys-Gly) (interchain with G-Cter in SUMO); alternate linkage. Residue Lys-25 forms a Glycyl lysine isopeptide (Lys-Gly) (interchain with G-Cter in SUMO) linkage. Residue Lys-131 forms a Glycyl lysine isopeptide (Lys-Gly) (interchain with G-Cter in ubiquitin) linkage.

This sequence belongs to the histone H2B family. As to quaternary structure, the nucleosome is a histone octamer containing two molecules each of H2A, H2B, H3 and H4 assembled in one H3-H4 heterotetramer and two H2A-H2B heterodimers. The octamer wraps approximately 147 bp of DNA. Monoubiquitinated by the ubc-2-bre-1 complex to form H2BK123ub1. H2BK123ub1 gives a specific tag for epigenetic transcriptional activation and is also prerequisite for H3K4me and H3K79me formation. H2BK123ub1 also modulates the formation of double-strand breaks during meiosis and is a prerequisite for DNA-damage checkpoint activation. Post-translationally, phosphorylated by ste-20 to form H2BS10ph during progression through meiotic prophase. May be correlated with chromosome condensation. In terms of processing, acetylated by gcn-5 to form H2BK11ac and H2BK16ac. H2BK16ac can also be formed by esa-1. Acetylation of N-terminal lysines and particularly formation of H2BK11acK16ac has a positive effect on transcription. Sumoylation to form H2BK6su or H2BK7su, and probably also H2BK16su or H2BK17su, occurs preferentially near the telomeres and represses gene transcription.

The protein localises to the nucleus. The protein resides in the chromosome. Functionally, core component of nucleosome. Nucleosomes wrap and compact DNA into chromatin, limiting DNA accessibility to the cellular machineries which require DNA as a template. Histones thereby play a central role in transcription regulation, DNA repair, DNA replication and chromosomal stability. DNA accessibility is regulated via a complex set of post-translational modifications of histones, also called histone code, and nucleosome remodeling. The chain is Histone H2B (hh2b) from Neurospora crassa (strain ATCC 24698 / 74-OR23-1A / CBS 708.71 / DSM 1257 / FGSC 987).